The following is a 676-amino-acid chain: Zinc finger CCCH domain-containing protein 38 (676 aa).

Disordered regions lie at residues 1-134, 172-217, 245-307, 487-506, and 533-594; these read MEMS…DHLF, SSDY…RSSN, RKQP…SWID, SVQP…NPNQ, and IQEV…DPKG. A compositionally biased stretch (basic and acidic residues) spans 12–21; the sequence is SKWDSKEDTH. Residues 58-79 show a composition bias toward polar residues; the sequence is RVSQNNDNSYFSEQDGTRQQFV. Basic and acidic residues-rich tracts occupy residues 101–110, 124–134, and 192–212; these read ARRDAGSYDR, EFNKRGSDHLF, and SEFT…EGGF. A C3H1-type zinc finger spans residues 214–243; that stretch reads RSSNIPCKFFAAGTGFCRNGKYCRFSHHVA. Positions 251–262 are enriched in low complexity; sequence NNNNFYRQDNNN. Residues 269–278 show a composition bias toward basic and acidic residues; it reads KWNDVERLDN. Residues 538 to 562 are compositionally biased toward basic and acidic residues; it reads LDPKENGDKKTDEASKEEEGKKTGE. Over residues 563-583 the composition is skewed to acidic residues; that stretch reads DTNDAENVVDEDEDGDDDGSD. A compositionally biased stretch (basic and acidic residues) spans 584–594; sequence EENKKEKDPKG.

In Arabidopsis thaliana (Mouse-ear cress), this protein is Zinc finger CCCH domain-containing protein 38.